A 239-amino-acid chain; its full sequence is Ribonuclease PH (239 aa).

Residues Arg-86 and 124 to 126 (GTR) contribute to the phosphate site.

This sequence belongs to the RNase PH family. In terms of assembly, homohexameric ring arranged as a trimer of dimers.

The enzyme catalyses tRNA(n+1) + phosphate = tRNA(n) + a ribonucleoside 5'-diphosphate. Its function is as follows. Phosphorolytic 3'-5' exoribonuclease that plays an important role in tRNA 3'-end maturation. Removes nucleotide residues following the 3'-CCA terminus of tRNAs; can also add nucleotides to the ends of RNA molecules by using nucleoside diphosphates as substrates, but this may not be physiologically important. Probably plays a role in initiation of 16S rRNA degradation (leading to ribosome degradation) during starvation. This chain is Ribonuclease PH, found in Cupriavidus taiwanensis (strain DSM 17343 / BCRC 17206 / CCUG 44338 / CIP 107171 / LMG 19424 / R1) (Ralstonia taiwanensis (strain LMG 19424)).